Here is a 270-residue protein sequence, read N- to C-terminus: MLGLQIFTLLSIPTLLYTYEIEPLERTSTPPEKELGYWCTYANHCRFCWDCQDGICRNKAFKNHSPILENNYIANCSIYRRNDFCIYYITSIKPHKTYRTECPQHINHERHEADIRKWQKLLTYGFYLAGCILAVNYIRKRSLQTVMYLLVFLVISFLLSQLMLYGELEDKKHKIGSIPPKRELEHWCTHGKYCNFCWDCQNGICKNKAFKNHPPIGENDFIRYDCWTTHLPNKCSYEKIYKHFNTHIMECSQPTHFKWYDNLMKKQDIM.

The signal sequence occupies residues methionine 1–arginine 26. Residues threonine 27–lysine 117 are Extracellular-facing. Residues threonine 27 to valine 146 form an A repeat. N-linked (GlcNAc...) asparagine; by host glycosylation is present at asparagine 75. Residues tryptophan 118–isoleucine 138 form a helical membrane-spanning segment. The Cytoplasmic portion of the chain corresponds to arginine 139–threonine 145. A helical transmembrane segment spans residues valine 146–glycine 166. The stretch at methionine 147–methionine 270 is one B repeat. Topologically, residues glutamate 167 to methionine 270 are extracellular.

It belongs to the asfivirus MGF 110 family.

The protein localises to the membrane. Its function is as follows. Plays a role in virus cell tropism, and may be required for efficient virus replication in macrophages. This chain is Protein MGF 110-1L, found in Ornithodoros (relapsing fever ticks).